A 381-amino-acid polypeptide reads, in one-letter code: rRNA adenine N-6-methyltransferase (381 aa).

Residues 1–19 (MSSSDEQPRPRRRNQDRQH) are compositionally biased toward basic and acidic residues. The disordered stretch occupies residues 1 to 42 (MSSSDEQPRPRRRNQDRQHPNQNRPVLGRTERDRNRRQFGQN). S-adenosyl-L-methionine-binding residues include asparagine 42, leucine 44, glycine 69, glutamate 90, aspartate 115, and alanine 131. Residues 282–381 (RLDQKNEPRG…PGRRGGPGQR (100 aa)) form a disordered region. The span at 301–358 (GGRDHGDRRTGGQDRGDRRTGGRDHRDRQASGHGDRRSSGRNRDDGRTGEREQGDQGG) shows a compositional bias: basic and acidic residues. Positions 359–381 (RRGPSGGGRTGGRPGRRGGPGQR) are enriched in gly residues.

It belongs to the class I-like SAM-binding methyltransferase superfamily. rRNA adenine N(6)-methyltransferase family.

It carries out the reaction adenosine(2085) in 23S rRNA + 2 S-adenosyl-L-methionine = N(6)-dimethyladenosine(2085) in 23S rRNA + 2 S-adenosyl-L-homocysteine + 2 H(+). Its function is as follows. This protein produces a dimethylation of the adenine residue at position 2085 in 23S rRNA, resulting in reduced affinity between ribosomes and macrolide-lincosamide-streptogramin B antibiotics. The polypeptide is rRNA adenine N-6-methyltransferase (ermE) (Saccharopolyspora erythraea (strain ATCC 11635 / DSM 40517 / JCM 4748 / NBRC 13426 / NCIMB 8594 / NRRL 2338)).